A 460-amino-acid polypeptide reads, in one-letter code: Nuclear distribution protein PAC1 (460 aa).

Positions 9-41 constitute a LisH domain; it reads QAEELHKSIIAYLAANNLQDSANAMRTELGLGE. Residues 61–88 are a coiled coil; sequence TSVVRLQKKIMDLEAQTQTLQTELNSAT. A compositionally biased stretch (polar residues) spans 82–92; sequence TELNSATPTSN. The segment at 82 to 105 is disordered; it reads TELNSATPTSNRRGDPSSWLPAGP. WD repeat units lie at residues 112–153, 155–195, 199–246, 249–288, 293–354, 355–394, and 399–456; these read SHRT…RTVK, HTKA…QNIR, GHDH…CVKT, GHAD…PEAK, GHEH…KTLI, GHDN…KCVK, and SHEH…MSLR. Positions 414 to 433 are disordered; sequence IKDKGPGEETNGDVGTPKKA.

It belongs to the WD repeat LIS1/nudF family. As to quaternary structure, self-associates. Interacts with NDL1 and dynein.

It localises to the cytoplasm. Its subcellular location is the cytoskeleton. The protein resides in the spindle pole. In terms of biological role, positively regulates the activity of the minus-end directed microtubule motor protein dynein. May enhance dynein-mediated microtubule sliding by targeting dynein to the microtubule plus end. Required for nuclear migration during vegetative growth as well as development. Required for retrograde early endosome (EE) transport from the hyphal tip. Required for localization of dynein to the mitotic spindle poles. Recruits additional proteins to the dynein complex at SPBs. The sequence is that of Nuclear distribution protein PAC1 from Gibberella zeae (strain ATCC MYA-4620 / CBS 123657 / FGSC 9075 / NRRL 31084 / PH-1) (Wheat head blight fungus).